We begin with the raw amino-acid sequence, 279 residues long: Inorganic pyrophosphatase (279 aa).

Arg100 lines the diphosphate pocket. Residues Asp132, Asp137, and Asp169 each contribute to the Mg(2+) site.

It belongs to the PPase family. The cofactor is Mg(2+).

The catalysed reaction is diphosphate + H2O = 2 phosphate + H(+). This Dictyostelium discoideum (Social amoeba) protein is Inorganic pyrophosphatase (ppa1).